The sequence spans 283 residues: 4-diphosphocytidyl-2-C-methyl-D-erythritol kinase (283 aa).

The active site involves lysine 13. 96 to 106 provides a ligand contact to ATP; that stretch reads PMGGGIGGGSS. Aspartate 138 is a catalytic residue.

It belongs to the GHMP kinase family. IspE subfamily.

It carries out the reaction 4-CDP-2-C-methyl-D-erythritol + ATP = 4-CDP-2-C-methyl-D-erythritol 2-phosphate + ADP + H(+). Its pathway is isoprenoid biosynthesis; isopentenyl diphosphate biosynthesis via DXP pathway; isopentenyl diphosphate from 1-deoxy-D-xylulose 5-phosphate: step 3/6. Its function is as follows. Catalyzes the phosphorylation of the position 2 hydroxy group of 4-diphosphocytidyl-2C-methyl-D-erythritol. The polypeptide is 4-diphosphocytidyl-2-C-methyl-D-erythritol kinase (Pseudomonas fluorescens (strain Pf0-1)).